Reading from the N-terminus, the 606-residue chain is Chaperone protein DnaK (606 aa).

Thr-174 is subject to Phosphothreonine; by autocatalysis. The disordered stretch occupies residues 578-606 (YTQAGPQGGTNPGGQGGTDGNVNTDYKVY). Residues 583–596 (PQGGTNPGGQGGTD) show a composition bias toward gly residues.

It belongs to the heat shock protein 70 family.

Acts as a chaperone. The chain is Chaperone protein DnaK from Caldicellulosiruptor saccharolyticus (strain ATCC 43494 / DSM 8903 / Tp8T 6331).